Consider the following 201-residue polypeptide: Probable nicotinate-nucleotide adenylyltransferase (201 aa).

This sequence belongs to the NadD family.

It catalyses the reaction nicotinate beta-D-ribonucleotide + ATP + H(+) = deamido-NAD(+) + diphosphate. It functions in the pathway cofactor biosynthesis; NAD(+) biosynthesis; deamido-NAD(+) from nicotinate D-ribonucleotide: step 1/1. Its function is as follows. Catalyzes the reversible adenylation of nicotinate mononucleotide (NaMN) to nicotinic acid adenine dinucleotide (NaAD). The polypeptide is Probable nicotinate-nucleotide adenylyltransferase (Clostridium botulinum (strain Okra / Type B1)).